Reading from the N-terminus, the 279-residue chain is MAIEFTKYHGLGNDFILIDNRASKTPAITPEKAVEMCDRHFGIGADGVIFALPGENGTDYTMRIFNSDGSEPEMCGNGIRCLAAFLADLEGLSRNKDTYRIHTLAGVITPQLTPDGQIKVDMGLPRLLAGEIPTTLGAADGKVINQPLEVEGQTWEVTCVSMGNPHCITFVEDVAAIPLEIIGPKFEHHPAFPQRTNTEFIQVVSRDYLKMRVWERGAGITLACGTGACASLVAAVLTGRSDRLATVELPGGPLEIEWSEVDQRIYMTGPADRVFTGKL.

Asn13 and Asn66 together coordinate substrate. The active-site Proton donor is the Cys75. Substrate-binding positions include 76–77 (GN), Asn164, Asn197, and 215–216 (ER). The active-site Proton acceptor is the Cys224. Residue 225–226 (GT) participates in substrate binding.

The protein belongs to the diaminopimelate epimerase family. Homodimer.

Its subcellular location is the cytoplasm. It catalyses the reaction (2S,6S)-2,6-diaminopimelate = meso-2,6-diaminopimelate. It functions in the pathway amino-acid biosynthesis; L-lysine biosynthesis via DAP pathway; DL-2,6-diaminopimelate from LL-2,6-diaminopimelate: step 1/1. Its function is as follows. Catalyzes the stereoinversion of LL-2,6-diaminopimelate (L,L-DAP) to meso-diaminopimelate (meso-DAP), a precursor of L-lysine and an essential component of the bacterial peptidoglycan. This chain is Diaminopimelate epimerase 1, found in Nostoc sp. (strain PCC 7120 / SAG 25.82 / UTEX 2576).